The following is a 431-amino-acid chain: Divergent protein kinase domain 1B (431 aa).

The Cytoplasmic segment spans residues 1–30 (MRRLRRLVHLVLLCPFSKGLQGRLPGLRVK). Positions 5 to 6 (RR) match the May mediate ER retention motif. A helical membrane pass occupies residues 31-51 (YVLLVWLGIFVGSWMVYVHYS). The Lumenal segment spans residues 52 to 431 (SYSELCRGHV…WREISNTNYS (380 aa)). 2 cysteine pairs are disulfide-bonded: C57-C94 and C62-C117.

This sequence belongs to the DIPK family. Post-translationally, among the many cysteines in the lumenal domain, most are probably involved in disulfide bonds.

The protein localises to the endoplasmic reticulum membrane. In Rattus norvegicus (Rat), this protein is Divergent protein kinase domain 1B.